We begin with the raw amino-acid sequence, 539 residues long: Phosphatidylinositol 4-phosphate 5-kinase type-1 beta (539 aa).

Positions 1 to 21 are disordered; the sequence is MSSTAENGDAVPGKQNEEKTY. Residues 25–395 enclose the PIPK domain; sequence ASSAIKGAIQ…RFLKFMNSRV (371 aa). 3 positions are modified to phosphoserine: Ser445, Ser447, and Ser448.

Interacts with RAC1, AJUBA, PLD1, PLD2 and ARF1. As to expression, highly expressed in brain and testis. Barely detectable in liver and skeletal muscle.

It localises to the cytoplasm. Its subcellular location is the cytosol. The protein localises to the cell membrane. The protein resides in the endomembrane system. The enzyme catalyses a 1,2-diacyl-sn-glycero-3-phospho-(1D-myo-inositol 4-phosphate) + ATP = a 1,2-diacyl-sn-glycero-3-phospho-(1D-myo-inositol-4,5-bisphosphate) + ADP + H(+). It carries out the reaction 1-octadecanoyl-2-(5Z,8Z,11Z,14Z)-eicosatetraenoyl-sn-glycero-3-phospho-1D-myo-inositol 4-phosphate + ATP = 1-octadecanoyl-2-(5Z,8Z,11Z,14Z)-eicosatetraenoyl-sn-glycero-3-phospho-1D-myo-inositol 4,5-bisphosphate + ADP + H(+). The catalysed reaction is 1-octadecanoyl-2-(9Z)-octadecenoyl-sn-glycero-3-phospho-1D-myo-inositol 4-phosphate + ATP = 1-octadecanoyl-2-(9Z)-octadecenoyl-sn-glycero-3-phospho-1D-myo-inositol 4,5-bisphosphate + ADP + H(+). It catalyses the reaction 1-octadecanoyl-2-(9Z)-octadecenoyl-sn-glycero-3-phospho-1D-myo-inositol + ATP = 1-octadecanoyl-2-(9Z)-octadecenoyl-sn-glycero-3-phospho-1D-myo-inositol 5-phosphate + ADP + H(+). The enzyme catalyses 1-octadecanoyl-2-(9Z,12Z)-octadecadienoyl-sn-glycero-3-phospho-1D-myo-inositol + ATP = 1-octadecanoyl-2-(9Z,12Z)-octadecadienoyl-sn-glycero-3-phospho-1D-myo-inositol 5-phosphate + ADP + H(+). It carries out the reaction 1-octadecanoyl-2-(5Z,8Z,11Z,14Z-eicosatetraenoyl)-sn-glycero-3-phospho-(1D-myo-inositol) + ATP = 1-octadecanoyl-2-(5Z,8Z,11Z,14Z)-eicosatetraenoyl-sn-glycero-3-phospho-1D-myo-inositol 5-phosphate + ADP + H(+). The catalysed reaction is 1,2-di-(9Z,12Z)-octadecadienoyl-sn-glycero-3-phospho-1D-myo-inositol + ATP = 1,2-di(9Z,12Z)-octadecadienoyl-sn-glycero-3-phospho-1D-myo-inositol 5-phosphate + ADP + H(+). Its activity is regulated as follows. Activated by phosphatidic acid. In terms of biological role, catalyzes the phosphorylation of phosphatidylinositol 4-phosphate (PtdIns(4)P/PI4P) to form phosphatidylinositol 4,5-bisphosphate (PtdIns(4,5)P2/PIP2), a lipid second messenger that regulates several cellular processes such as signal transduction, vesicle trafficking, actin cytoskeleton dynamics, cell adhesion, and cell motility. PtdIns(4,5)P2 can directly act as a second messenger or can be utilized as a precursor to generate other second messengers: inositol 1,4,5-trisphosphate (IP3), diacylglycerol (DAG) or phosphatidylinositol-3,4,5-trisphosphate (PtdIns(3,4,5)P3/PIP3). Mediates RAC1-dependent reorganization of actin filaments. Contributes to the activation of phospholipase PLD2. Together with PIP5K1A, is required, after stimulation by G-protein coupled receptors, for the synthesis of IP3 that will induce stable platelet adhesion. The protein is Phosphatidylinositol 4-phosphate 5-kinase type-1 beta of Mus musculus (Mouse).